Consider the following 333-residue polypeptide: Electron transfer flavoprotein subunit alpha, mitochondrial (333 aa).

A mitochondrion-targeting transit peptide spans 1-19; it reads MFRAAAPGQLRRAASLLRF. Residues 20 to 204 form a domain I region; sequence QSTLVIAEHA…GISEWLDQKL (185 aa). Lys59 is subject to N6-acetyllysine; alternate. The residue at position 59 (Lys59) is an N6-succinyllysine; alternate. Lys62 is modified (N6-acetyllysine). The residue at position 69 (Lys69) is an N6-acetyllysine; alternate. Lys69 carries the N6-succinyllysine; alternate modification. Lys75 carries the N6-acetyllysine modification. Lys85 is subject to N6-acetyllysine; alternate. Lys85 is subject to N6-succinyllysine; alternate. Position 93 is a phosphothreonine (Thr93). Residues Lys101 and Lys139 each carry the N6-acetyllysine modification. Phosphoserine is present on Ser140. Residue Lys158 is modified to N6-acetyllysine; alternate. The residue at position 158 (Lys158) is an N6-succinyllysine; alternate. Lys164 carries the post-translational modification N6-acetyllysine. At Lys187 the chain carries N6-succinyllysine. At Lys203 the chain carries N6-acetyllysine; alternate. At Lys203 the chain carries N6-succinyllysine; alternate. The tract at residues 205–333 is domain II; the sequence is TKSDRPELTG…PEMTEILKKK (129 aa). Lys216 carries the post-translational modification N6-succinyllysine. Position 223 (Arg223) interacts with FAD. Residues Lys226 and Lys232 each carry the N6-acetyllysine; alternate modification. 2 positions are modified to N6-succinyllysine; alternate: Lys226 and Lys232. FAD is bound by residues Ser248, 263–266, 281–286, and Asn300; these read VGQT and SGAIQH. Lys301 carries the N6-succinyllysine modification. 318–319 contributes to the FAD binding site; it reads DL.

This sequence belongs to the ETF alpha-subunit/FixB family. In terms of assembly, heterodimer composed of ETFA and ETFB. Identified in a complex that contains ETFA, ETFB and ETFRF1. Interaction with ETFRF1 promotes dissociation of the bound FAD and loss of electron transfer activity. Interacts with TASOR. FAD serves as cofactor. Expressed in the spermatogonia, spermatocytes, ovary and granular cells within the cerebellum.

It localises to the mitochondrion matrix. Its function is as follows. Heterodimeric electron transfer flavoprotein that accepts electrons from several mitochondrial dehydrogenases, including acyl-CoA dehydrogenases, glutaryl-CoA and sarcosine dehydrogenase. It transfers the electrons to the main mitochondrial respiratory chain via ETF-ubiquinone oxidoreductase (ETF dehydrogenase). Required for normal mitochondrial fatty acid oxidation and normal amino acid metabolism. This is Electron transfer flavoprotein subunit alpha, mitochondrial (Etfa) from Mus musculus (Mouse).